Here is a 289-residue protein sequence, read N- to C-terminus: Glycine--tRNA ligase alpha subunit (289 aa).

This sequence belongs to the class-II aminoacyl-tRNA synthetase family. In terms of assembly, tetramer of two alpha and two beta subunits.

The protein resides in the cytoplasm. The catalysed reaction is tRNA(Gly) + glycine + ATP = glycyl-tRNA(Gly) + AMP + diphosphate. The protein is Glycine--tRNA ligase alpha subunit of Prochlorococcus marinus subsp. pastoris (strain CCMP1986 / NIES-2087 / MED4).